We begin with the raw amino-acid sequence, 460 residues long: Serine--tRNA ligase (460 aa).

255-257 contacts L-serine; that stretch reads TAE. ATP-binding positions include 286–288 and Val-302; that span reads RKE. Glu-309 contributes to the L-serine binding site. 373-376 serves as a coordination point for ATP; sequence EMVS. Position 409 (Thr-409) interacts with L-serine.

It belongs to the class-II aminoacyl-tRNA synthetase family. Type-1 seryl-tRNA synthetase subfamily. Homodimer. The tRNA molecule binds across the dimer.

The protein localises to the cytoplasm. It carries out the reaction tRNA(Ser) + L-serine + ATP = L-seryl-tRNA(Ser) + AMP + diphosphate + H(+). It catalyses the reaction tRNA(Sec) + L-serine + ATP = L-seryl-tRNA(Sec) + AMP + diphosphate + H(+). It participates in aminoacyl-tRNA biosynthesis; selenocysteinyl-tRNA(Sec) biosynthesis; L-seryl-tRNA(Sec) from L-serine and tRNA(Sec): step 1/1. Catalyzes the attachment of serine to tRNA(Ser). Is also able to aminoacylate tRNA(Sec) with serine, to form the misacylated tRNA L-seryl-tRNA(Sec), which will be further converted into selenocysteinyl-tRNA(Sec). This Hyperthermus butylicus (strain DSM 5456 / JCM 9403 / PLM1-5) protein is Serine--tRNA ligase.